A 471-amino-acid chain; its full sequence is ATP synthase subunit beta (471 aa).

153 to 160 (GGAGVGKT) contributes to the ATP binding site.

This sequence belongs to the ATPase alpha/beta chains family. As to quaternary structure, F-type ATPases have 2 components, CF(1) - the catalytic core - and CF(0) - the membrane proton channel. CF(1) has five subunits: alpha(3), beta(3), gamma(1), delta(1), epsilon(1). CF(0) has four main subunits: a(1), b(1), b'(1) and c(9-12).

It is found in the cell membrane. The enzyme catalyses ATP + H2O + 4 H(+)(in) = ADP + phosphate + 5 H(+)(out). In terms of biological role, produces ATP from ADP in the presence of a proton gradient across the membrane. The catalytic sites are hosted primarily by the beta subunits. The protein is ATP synthase subunit beta of Chloroflexus aurantiacus (strain ATCC 29364 / DSM 637 / Y-400-fl).